The chain runs to 327 residues: Olfactory receptor 226 (327 aa).

The Extracellular portion of the chain corresponds to 1–26; that stretch reads MERRNHSGRVSEFVLLGFPAPAPLRV. Residue Asn5 is glycosylated (N-linked (GlcNAc...) asparagine). A helical transmembrane segment spans residues 27–50; that stretch reads LLFFLSLLAYVLVLTENMLIIIAI. The Cytoplasmic segment spans residues 51 to 58; sequence RNHPTLHK. A helical transmembrane segment spans residues 59–80; the sequence is PMYFFLANMSFLEIWYVTVTIP. Topologically, residues 81 to 104 are extracellular; it reads KMLAGFIGSKENHGQLISFEACMT. Cys102 and Cys194 are oxidised to a cystine. The helical transmembrane segment at 105–125 threads the bilayer; it reads QLYFFLGLGCTECVLLAVMAY. The Cytoplasmic portion of the chain corresponds to 126 to 144; it reads DRYVAICHPLHYPVIVSSR. The chain crosses the membrane as a helical span at residues 145–163; it reads LCVQMAAGSWAGGFGISMV. Residues 164–201 are Extracellular-facing; that stretch reads KVFLISRLSYCGPNTINHFFCDVSPLLNLSCTDMSTAE. A helical transmembrane segment spans residues 202-224; the sequence is LTDFVLAIFILLGPLSVTGASYM. At 225–241 the chain is on the cytoplasmic side; the sequence is AITGAVMRIPSAAGRHK. A helical transmembrane segment spans residues 242-265; sequence AFSTCASHLTVVIIFYAASIFIYA. The Extracellular portion of the chain corresponds to 266 to 277; the sequence is RPKALSAFDTNK. A helical membrane pass occupies residues 278-297; that stretch reads LVSVLYAVIVPLFNPIIYCL. Residues 298 to 327 are Cytoplasmic-facing; that stretch reads RNQDVKRALRRTLHLAQDQEANTNKGSKNG.

The protein belongs to the G-protein coupled receptor 1 family. In terms of tissue distribution, olfactory epithelium.

The protein resides in the cell membrane. Odorant receptor. The sequence is that of Olfactory receptor 226 (Olr226) from Rattus norvegicus (Rat).